Here is a 37-residue protein sequence, read N- to C-terminus: Large ribosomal subunit protein bL36c (37 aa).

It belongs to the bacterial ribosomal protein bL36 family.

It is found in the plastid. The sequence is that of Large ribosomal subunit protein bL36c (rpl36) from Epifagus virginiana (Beechdrops).